The chain runs to 267 residues: Geranylgeranylglyceryl phosphate synthase (267 aa).

Positions 23 and 52 each coordinate Mg(2+). Residues 173–179 (YLEAGSG), 205–206 (GG), and 227–228 (GT) each bind sn-glycerol 1-phosphate.

It belongs to the GGGP/HepGP synthase family. Group II subfamily. Requires Mg(2+) as cofactor.

It localises to the cytoplasm. It catalyses the reaction sn-glycerol 1-phosphate + (2E,6E,10E)-geranylgeranyl diphosphate = sn-3-O-(geranylgeranyl)glycerol 1-phosphate + diphosphate. It participates in membrane lipid metabolism; glycerophospholipid metabolism. Its function is as follows. Prenyltransferase that catalyzes the transfer of the geranylgeranyl moiety of geranylgeranyl diphosphate (GGPP) to the C3 hydroxyl of sn-glycerol-1-phosphate (G1P). This reaction is the first ether-bond-formation step in the biosynthesis of archaeal membrane lipids. The sequence is that of Geranylgeranylglyceryl phosphate synthase from Caldivirga maquilingensis (strain ATCC 700844 / DSM 13496 / JCM 10307 / IC-167).